Reading from the N-terminus, the 280-residue chain is UDP-3-O-acyl-N-acetylglucosamine deacetylase (280 aa).

Residues His77, His238, and Asp242 each contribute to the Zn(2+) site. The active-site Proton donor is His265.

It belongs to the LpxC family. Zn(2+) is required as a cofactor.

It carries out the reaction a UDP-3-O-[(3R)-3-hydroxyacyl]-N-acetyl-alpha-D-glucosamine + H2O = a UDP-3-O-[(3R)-3-hydroxyacyl]-alpha-D-glucosamine + acetate. The protein operates within glycolipid biosynthesis; lipid IV(A) biosynthesis; lipid IV(A) from (3R)-3-hydroxytetradecanoyl-[acyl-carrier-protein] and UDP-N-acetyl-alpha-D-glucosamine: step 2/6. In terms of biological role, catalyzes the hydrolysis of UDP-3-O-myristoyl-N-acetylglucosamine to form UDP-3-O-myristoylglucosamine and acetate, the committed step in lipid A biosynthesis. This Nostoc sp. (strain PCC 7120 / SAG 25.82 / UTEX 2576) protein is UDP-3-O-acyl-N-acetylglucosamine deacetylase.